The sequence spans 283 residues: 5'-nucleotidase SurE (283 aa).

Residues Asp-14, Asp-15, Ser-47, and Asn-105 each coordinate a divalent metal cation.

It belongs to the SurE nucleotidase family. The cofactor is a divalent metal cation.

It localises to the cytoplasm. The catalysed reaction is a ribonucleoside 5'-phosphate + H2O = a ribonucleoside + phosphate. In terms of biological role, nucleotidase that shows phosphatase activity on nucleoside 5'-monophosphates. The protein is 5'-nucleotidase SurE of Chlamydia trachomatis serovar D (strain ATCC VR-885 / DSM 19411 / UW-3/Cx).